A 344-amino-acid polypeptide reads, in one-letter code: tRNA N6-adenosine threonylcarbamoyltransferase (344 aa).

Residues H112 and H116 each coordinate Fe cation. Substrate contacts are provided by residues L135–G139, D168, G181, and N271. Fe cation is bound at residue D299. Positions R323–A344 are disordered.

The protein belongs to the KAE1 / TsaD family. Fe(2+) serves as cofactor.

It localises to the cytoplasm. The enzyme catalyses L-threonylcarbamoyladenylate + adenosine(37) in tRNA = N(6)-L-threonylcarbamoyladenosine(37) in tRNA + AMP + H(+). Functionally, required for the formation of a threonylcarbamoyl group on adenosine at position 37 (t(6)A37) in tRNAs that read codons beginning with adenine. Is involved in the transfer of the threonylcarbamoyl moiety of threonylcarbamoyl-AMP (TC-AMP) to the N6 group of A37, together with TsaE and TsaB. TsaD likely plays a direct catalytic role in this reaction. The chain is tRNA N6-adenosine threonylcarbamoyltransferase from Erythrobacter litoralis (strain HTCC2594).